The chain runs to 88 residues: Actobindin (88 aa).

Met-1 carries the post-translational modification N-acetylmethionine. The tract at residues 1–22 is disordered; the sequence is MNPELQSAIGQGAALKHAETVD. Lys-35 carries the N6,N6,N6-trimethyllysine modification. A WH2 domain is found at 37–54; that stretch reads DRSSFLEEVAKPHELKHA. An N6,N6,N6-trimethyllysine modification is found at Lys-72.

Monomer.

Its function is as follows. Is able to bind two actin monomers at high concentrations of G-actin. This chain is Actobindin, found in Acanthamoeba castellanii (Amoeba).